The sequence spans 43 residues: Protein PsbN (43 aa).

The helical transmembrane segment at 7–27 (ITIFLSCFLVGVTGYALYTAF) threads the bilayer.

It belongs to the PsbN family.

The protein localises to the plastid. The protein resides in the chloroplast thylakoid membrane. May play a role in photosystem I and II biogenesis. In Klebsormidium bilatum (Filamentous green alga), this protein is Protein PsbN.